The following is a 209-amino-acid chain: Outer-membrane lipoprotein carrier protein (209 aa).

A signal peptide spans 1 to 22; sequence MKKLLLTLAMVPAVLFSPTAWG.

The protein belongs to the LolA family. As to quaternary structure, monomer.

The protein resides in the periplasm. In terms of biological role, participates in the translocation of lipoproteins from the inner membrane to the outer membrane. Only forms a complex with a lipoprotein if the residue after the N-terminal Cys is not an aspartate (The Asp acts as a targeting signal to indicate that the lipoprotein should stay in the inner membrane). The chain is Outer-membrane lipoprotein carrier protein from Alcanivorax borkumensis (strain ATCC 700651 / DSM 11573 / NCIMB 13689 / SK2).